The following is a 641-amino-acid chain: DEAD-box ATP-dependent RNA helicase 50 (641 aa).

3 disordered regions span residues 86–115 (SMPSPAVLSTTTRVPDRPKENGRSTSIGNF), 129–189 (RSAH…LNSV), and 197–216 (DDLDFPGSEATSGSKRWGNI). A compositionally biased stretch (acidic residues) spans 150-159 (PSDESDEDGT). The short motif at 240–268 (RSFKEIGCSDEILGALRSFGFPRPSHIQA) is the Q motif element. A Helicase ATP-binding domain is found at 271–452 (YRPVLEGKSC…VETFPDCELI (182 aa)). 284 to 291 (DQSGSGKT) contacts ATP. Positions 399–402 (DEVD) match the DEAD box motif. Positions 487–641 (NKKSALVKII…GHPLHDVPCV (155 aa)) constitute a Helicase C-terminal domain.

Belongs to the DEAD box helicase family.

It catalyses the reaction ATP + H2O = ADP + phosphate + H(+). Probably involved in resistance to biotic and abiotic stresses. Confers tolerance to oxidative stress and mediates pathogenesis-related (PR) genes expression. Exhibits RNA-dependent ATPase and ATP-dependent RNA helicase activities in vitro. The protein is DEAD-box ATP-dependent RNA helicase 50 of Oryza sativa subsp. japonica (Rice).